The following is a 425-amino-acid chain: Serine--tRNA ligase (425 aa).

Thr231 to Glu233 is a binding site for L-serine. ATP is bound at residue Arg262–Glu264. Position 285 (Glu285) interacts with L-serine. An ATP-binding site is contributed by Glu349–Ser352. Ser385 provides a ligand contact to L-serine.

Belongs to the class-II aminoacyl-tRNA synthetase family. Type-1 seryl-tRNA synthetase subfamily. As to quaternary structure, homodimer. The tRNA molecule binds across the dimer.

It localises to the cytoplasm. It catalyses the reaction tRNA(Ser) + L-serine + ATP = L-seryl-tRNA(Ser) + AMP + diphosphate + H(+). It carries out the reaction tRNA(Sec) + L-serine + ATP = L-seryl-tRNA(Sec) + AMP + diphosphate + H(+). It functions in the pathway aminoacyl-tRNA biosynthesis; selenocysteinyl-tRNA(Sec) biosynthesis; L-seryl-tRNA(Sec) from L-serine and tRNA(Sec): step 1/1. In terms of biological role, catalyzes the attachment of serine to tRNA(Ser). Is also able to aminoacylate tRNA(Sec) with serine, to form the misacylated tRNA L-seryl-tRNA(Sec), which will be further converted into selenocysteinyl-tRNA(Sec). The chain is Serine--tRNA ligase from Bartonella henselae (strain ATCC 49882 / DSM 28221 / CCUG 30454 / Houston 1) (Rochalimaea henselae).